The primary structure comprises 108 residues: Pyrimidine/purine nucleoside phosphorylase (108 aa).

Belongs to the nucleoside phosphorylase PpnP family.

The enzyme catalyses a purine D-ribonucleoside + phosphate = a purine nucleobase + alpha-D-ribose 1-phosphate. It catalyses the reaction adenosine + phosphate = alpha-D-ribose 1-phosphate + adenine. It carries out the reaction cytidine + phosphate = cytosine + alpha-D-ribose 1-phosphate. The catalysed reaction is guanosine + phosphate = alpha-D-ribose 1-phosphate + guanine. The enzyme catalyses inosine + phosphate = alpha-D-ribose 1-phosphate + hypoxanthine. It catalyses the reaction thymidine + phosphate = 2-deoxy-alpha-D-ribose 1-phosphate + thymine. It carries out the reaction uridine + phosphate = alpha-D-ribose 1-phosphate + uracil. The catalysed reaction is xanthosine + phosphate = alpha-D-ribose 1-phosphate + xanthine. Its function is as follows. Catalyzes the phosphorolysis of diverse nucleosides, yielding D-ribose 1-phosphate and the respective free bases. Can use uridine, adenosine, guanosine, cytidine, thymidine, inosine and xanthosine as substrates. Also catalyzes the reverse reactions. The chain is Pyrimidine/purine nucleoside phosphorylase from Polaromonas naphthalenivorans (strain CJ2).